The following is a 237-amino-acid chain: Uridylate kinase (237 aa).

ATP is bound at residue 11-14 (KLSG). G53 is a UMP binding site. Positions 54 and 58 each coordinate ATP. Residues D73 and 134 to 141 (TGNPFFTT) contribute to the UMP site. ATP-binding residues include T161, Y167, and D170.

It belongs to the UMP kinase family. Homohexamer.

The protein resides in the cytoplasm. The catalysed reaction is UMP + ATP = UDP + ADP. It functions in the pathway pyrimidine metabolism; CTP biosynthesis via de novo pathway; UDP from UMP (UMPK route): step 1/1. Inhibited by UTP. Functionally, catalyzes the reversible phosphorylation of UMP to UDP. This is Uridylate kinase from Paraburkholderia xenovorans (strain LB400).